The following is a 578-amino-acid chain: ATP-dependent RNA helicase CHR1 (578 aa).

The segment at 1–95 (MDIFRILSRG…NETKAKEEEI (95 aa)) is disordered. 2 stretches are compositionally biased toward basic and acidic residues: residues 44-53 (EVERETDFFH) and 78-94 (NKEE…KEEE). The Q motif signature appears at 131-159 (DMIGRFHINKKVLSNLIDNEFVEPTPIQC). The Helicase ATP-binding domain maps to 162–339 (IPITLNNRDL…HSIMKDPLRI (178 aa)). Residue 175–182 (APTGSGKT) coordinates ATP. Residues 286–289 (DEAD) carry the DEAD box motif. The 165-residue stretch at 350–514 (TIDQKLVFTG…GYSQWMEDMG (165 aa)) folds into the Helicase C-terminal domain. Composition is skewed to basic and acidic residues over residues 517 to 531 (SKKE…EIQR) and 561 to 578 (ESKQ…EREE). The tract at residues 517–578 (SKKEKKQIKT…ESHSNDEREE (62 aa)) is disordered.

This sequence belongs to the DEAD box helicase family. DDX52/ROK1 subfamily. Interacts with the U3 snoRNA and is associated with the 90S and 40S pre-ribosomes.

Its subcellular location is the nucleus. It is found in the nucleolus. The catalysed reaction is ATP + H2O = ADP + phosphate + H(+). In terms of biological role, ATP-dependent RNA helicase involved in 40S ribosomal subunit biogenesis. Required for the processing and cleavage of 35S pre-rRNA at sites A0, A1, and A2, leading to mature 18S rRNA. In Candida albicans (strain SC5314 / ATCC MYA-2876) (Yeast), this protein is ATP-dependent RNA helicase CHR1 (CHR1).